A 91-amino-acid chain; its full sequence is MSVKIRMKRMGSKKRPFYRIVVADSRSPRDGRFIQQVGYYNPLTEPVDLKLEEEVIMDWLQKGAQPSDTVRNLLSKQGIMQKYHEARFAKK.

The protein belongs to the bacterial ribosomal protein bS16 family.

The polypeptide is Small ribosomal subunit protein bS16 (Latilactobacillus sakei subsp. sakei (strain 23K) (Lactobacillus sakei subsp. sakei)).